Reading from the N-terminus, the 1038-residue chain is Eukaryotic translation initiation factor 3 subunit A (1038 aa).

Residues 92 to 121 are a coiled coil; it reads LKKFIELAEKKVTEAQAKADEIQSSLESAA. The 185-residue stretch at 339–523 folds into the PCI domain; that stretch reads MTKAVSFVLL…GVLTFDTDVF (185 aa). Residues 611–899 are a coiled coil; it reads IDKKKEAATD…QKQREEEAEA (289 aa). 2 stretches are compositionally biased toward basic and acidic residues: residues 621 to 632 and 800 to 901; these read ALQRKQREEETR and RHEE…EARR. Disordered regions lie at residues 621–641 and 800–1038; these read ALQR…QQLQ and RHEE…QQGQ. 2 stretches are compositionally biased toward low complexity: residues 943–952 and 976–993; these read KEAAGGAAPE and GASA…AAPS. The span at 1002–1019 shows a compositional bias: polar residues; the sequence is DSGSSTPPSRTQTPATTS.

It belongs to the eIF-3 subunit A family. As to quaternary structure, component of the eukaryotic translation initiation factor 3 (eIF-3) complex.

It is found in the cytoplasm. Functionally, RNA-binding component of the eukaryotic translation initiation factor 3 (eIF-3) complex, which is involved in protein synthesis of a specialized repertoire of mRNAs and, together with other initiation factors, stimulates binding of mRNA and methionyl-tRNAi to the 40S ribosome. The eIF-3 complex specifically targets and initiates translation of a subset of mRNAs involved in cell proliferation. In Aspergillus oryzae (strain ATCC 42149 / RIB 40) (Yellow koji mold), this protein is Eukaryotic translation initiation factor 3 subunit A (tif32).